A 223-amino-acid polypeptide reads, in one-letter code: Deoxyribose-phosphate aldolase (223 aa).

Catalysis depends on D92, which acts as the Proton donor/acceptor. The active-site Schiff-base intermediate with acetaldehyde is the K154. Catalysis depends on K182, which acts as the Proton donor/acceptor.

It belongs to the DeoC/FbaB aldolase family. DeoC type 1 subfamily.

The protein localises to the cytoplasm. It carries out the reaction 2-deoxy-D-ribose 5-phosphate = D-glyceraldehyde 3-phosphate + acetaldehyde. The protein operates within carbohydrate degradation; 2-deoxy-D-ribose 1-phosphate degradation; D-glyceraldehyde 3-phosphate and acetaldehyde from 2-deoxy-alpha-D-ribose 1-phosphate: step 2/2. Its function is as follows. Catalyzes a reversible aldol reaction between acetaldehyde and D-glyceraldehyde 3-phosphate to generate 2-deoxy-D-ribose 5-phosphate. The protein is Deoxyribose-phosphate aldolase of Haemophilus influenzae (strain 86-028NP).